The following is a 211-amino-acid chain: NADH-quinone oxidoreductase subunit I 1 (211 aa).

2 consecutive 4Fe-4S ferredoxin-type domains span residues 50 to 80 (LNRH…VEGA) and 96 to 125 (RVYQ…MTNE). [4Fe-4S] cluster contacts are provided by C60, C63, C66, C70, C105, C108, C111, and C115. The disordered stretch occupies residues 192–211 (QEGDSTFGATEPASEEVIRR).

It belongs to the complex I 23 kDa subunit family. NDH-1 is composed of 14 different subunits. Subunits NuoA, H, J, K, L, M, N constitute the membrane sector of the complex. The cofactor is [4Fe-4S] cluster.

The protein localises to the cell membrane. It carries out the reaction a quinone + NADH + 5 H(+)(in) = a quinol + NAD(+) + 4 H(+)(out). Its function is as follows. NDH-1 shuttles electrons from NADH, via FMN and iron-sulfur (Fe-S) centers, to quinones in the respiratory chain. The immediate electron acceptor for the enzyme in this species is believed to be ubiquinone. Couples the redox reaction to proton translocation (for every two electrons transferred, four hydrogen ions are translocated across the cytoplasmic membrane), and thus conserves the redox energy in a proton gradient. The polypeptide is NADH-quinone oxidoreductase subunit I 1 (Streptomyces coelicolor (strain ATCC BAA-471 / A3(2) / M145)).